A 248-amino-acid polypeptide reads, in one-letter code: Probable transcriptional regulatory protein PSPPH_3775 (248 aa).

This sequence belongs to the TACO1 family.

The protein localises to the cytoplasm. The polypeptide is Probable transcriptional regulatory protein PSPPH_3775 (Pseudomonas savastanoi pv. phaseolicola (strain 1448A / Race 6) (Pseudomonas syringae pv. phaseolicola (strain 1448A / Race 6))).